Reading from the N-terminus, the 316-residue chain is tRNA dimethylallyltransferase (316 aa).

Position 23–30 (23–30) interacts with ATP; the sequence is GPTASGKS. 25 to 30 contacts substrate; sequence TASGKS. Positions 48–51 are interaction with substrate tRNA; it reads DSMQ.

It belongs to the IPP transferase family. In terms of assembly, monomer. It depends on Mg(2+) as a cofactor.

The enzyme catalyses adenosine(37) in tRNA + dimethylallyl diphosphate = N(6)-dimethylallyladenosine(37) in tRNA + diphosphate. Its function is as follows. Catalyzes the transfer of a dimethylallyl group onto the adenine at position 37 in tRNAs that read codons beginning with uridine, leading to the formation of N6-(dimethylallyl)adenosine (i(6)A). In Rhodopseudomonas palustris (strain BisB18), this protein is tRNA dimethylallyltransferase.